The chain runs to 1022 residues: D-2-hydroxyglutarate dehydrogenase (1022 aa).

Residues 53-286 (YQLLPDAVLF…SEARLDITPL (234 aa)) form the FAD-binding PCMH-type domain. Residues arginine 407 and histidine 505 each contribute to the (R)-2-hydroxyglutarate site. The region spanning 667-700 (FSHEVKEAMSGCLACKACSTQCPIKIDVPAFRSR) is the 4Fe-4S ferredoxin-type domain. Residues cysteine 678, cysteine 681, cysteine 684, and cysteine 688 each coordinate [4Fe-4S] cluster.

It in the N-terminal section; belongs to the FAD-binding oxidoreductase/transferase type 4 family. As to quaternary structure, homotetramer. The cofactor is [4Fe-4S] cluster. Requires FAD as cofactor.

It carries out the reaction (R)-2-hydroxyglutarate + A = 2-oxoglutarate + AH2. Its activity is regulated as follows. Activity is completely inhibited by the addition of 0.5 mM Mn(2+), Ni(2+), or Co(2+) and partially inhibited by 0.5 mM Zn(2+). Functionally, catalyzes the oxidation of D-2-hydroxyglutarate (D-2-HGA) to 2-oxoglutarate. Appears to be the only D2HGDH in P.ananatis, providing the way to recycle D-2-HGA produced during L-serine synthesis by SerA, by converting it back to 2-oxoglutarate. Is involved in the utilization of D-2-HGA, that can support the growth of P.ananatis as a sole carbon source, although it barely serves as a good substrate. The physiological molecule that functions as the primary electron acceptor during D-2-HGA oxidation by YdiJ in P.ananatis is unknown. Shows strict substrate specificity towards D-2-HGA, since it has no detectable activity on L-2-hydroxyglutarate, L-malate, D-malate, L-lactate, D-lactate, L-tartrate, D-tartrate, L-glycerate, D-glycerate, glutarate, or pyruvate. The sequence is that of D-2-hydroxyglutarate dehydrogenase from Pantoea ananatis (strain AJ13355).